Here is a 308-residue protein sequence, read N- to C-terminus: Oxygen-dependent coproporphyrinogen-III oxidase (308 aa).

Residue serine 100 coordinates substrate. Positions 104 and 114 each coordinate a divalent metal cation. Catalysis depends on histidine 114, which acts as the Proton donor. Substrate is bound at residue 116–118 (NFR). 2 residues coordinate a divalent metal cation: histidine 153 and histidine 183. The interval 248 to 283 (YVEFNLVFDRGTIFGLQSGGRTESILSSMPPMATWK) is important for dimerization. 266-268 (GGR) contacts substrate.

It belongs to the aerobic coproporphyrinogen-III oxidase family. In terms of assembly, homodimer. It depends on a divalent metal cation as a cofactor.

It localises to the cytoplasm. It carries out the reaction coproporphyrinogen III + O2 + 2 H(+) = protoporphyrinogen IX + 2 CO2 + 2 H2O. Its pathway is porphyrin-containing compound metabolism; protoporphyrin-IX biosynthesis; protoporphyrinogen-IX from coproporphyrinogen-III (O2 route): step 1/1. Its function is as follows. Involved in the heme biosynthesis. Catalyzes the aerobic oxidative decarboxylation of propionate groups of rings A and B of coproporphyrinogen-III to yield the vinyl groups in protoporphyrinogen-IX. The polypeptide is Oxygen-dependent coproporphyrinogen-III oxidase (Francisella tularensis subsp. holarctica (strain LVS)).